A 131-amino-acid polypeptide reads, in one-letter code: MAQIPAGADRPGKLSRKQTGDAWELKARRWLEGKGLRFIAANVHGRGGEIDLIMKDGQVIVFIEVRFRQSSRFGGAAASVTLAKQHKLLQTAHLWLARHNGSFDTVDCRFDVVAFTGNDIEWLKNAFGEDA.

Positions 1–20 (MAQIPAGADRPGKLSRKQTG) are disordered.

Belongs to the UPF0102 family.

In Enterobacter sp. (strain 638), this protein is UPF0102 protein Ent638_3585.